A 365-amino-acid chain; its full sequence is NAD(P)H-quinone oxidoreductase subunit 1, chloroplastic (365 aa).

6 helical membrane-spanning segments follow: residues 30 to 50 (LVPI…IVWL), 104 to 124 (IAVI…HFVL), 129 to 149 (IGVF…LMSG), 253 to 273 (FGLF…FVAV), 302 to 322 (VFGT…FLFI), and 338 to 358 (LLNL…LLTT).

The protein belongs to the complex I subunit 1 family. NDH is composed of at least 16 different subunits, 5 of which are encoded in the nucleus.

It localises to the plastid. The protein localises to the chloroplast thylakoid membrane. It carries out the reaction a plastoquinone + NADH + (n+1) H(+)(in) = a plastoquinol + NAD(+) + n H(+)(out). The enzyme catalyses a plastoquinone + NADPH + (n+1) H(+)(in) = a plastoquinol + NADP(+) + n H(+)(out). In terms of biological role, NDH shuttles electrons from NAD(P)H:plastoquinone, via FMN and iron-sulfur (Fe-S) centers, to quinones in the photosynthetic chain and possibly in a chloroplast respiratory chain. The immediate electron acceptor for the enzyme in this species is believed to be plastoquinone. Couples the redox reaction to proton translocation, and thus conserves the redox energy in a proton gradient. This is NAD(P)H-quinone oxidoreductase subunit 1, chloroplastic from Populus trichocarpa (Western balsam poplar).